The chain runs to 211 residues: Redox-sensing transcriptional repressor Rex (211 aa).

Positions 17-56 form a DNA-binding region, H-T-H motif; that stretch reads KYHRYLEELLRNEVDRISSKELSKKIGFTASQIRQDFNCF. Residue 91-96 coordinates NAD(+); that stretch reads GGGNIG.

The protein belongs to the transcriptional regulatory Rex family. Homodimer.

The protein localises to the cytoplasm. Modulates transcription in response to changes in cellular NADH/NAD(+) redox state. The sequence is that of Redox-sensing transcriptional repressor Rex from Clostridium tetani (strain Massachusetts / E88).